The primary structure comprises 126 residues: Aspartate 1-decarboxylase (126 aa).

The Schiff-base intermediate with substrate; via pyruvic acid role is filled by serine 25. At serine 25 the chain carries Pyruvic acid (Ser). Threonine 57 contributes to the substrate binding site. The active-site Proton donor is tyrosine 58. 73-75 contacts substrate; it reads GGA.

Belongs to the PanD family. Heterooctamer of four alpha and four beta subunits. Pyruvate serves as cofactor. Post-translationally, is synthesized initially as an inactive proenzyme, which is activated by self-cleavage at a specific serine bond to produce a beta-subunit with a hydroxyl group at its C-terminus and an alpha-subunit with a pyruvoyl group at its N-terminus.

The protein localises to the cytoplasm. The catalysed reaction is L-aspartate + H(+) = beta-alanine + CO2. It participates in cofactor biosynthesis; (R)-pantothenate biosynthesis; beta-alanine from L-aspartate: step 1/1. Its function is as follows. Catalyzes the pyruvoyl-dependent decarboxylation of aspartate to produce beta-alanine. In Acinetobacter baumannii (strain ACICU), this protein is Aspartate 1-decarboxylase.